We begin with the raw amino-acid sequence, 121 residues long: Large ribosomal subunit protein uL22 (121 aa).

This sequence belongs to the universal ribosomal protein uL22 family. As to quaternary structure, part of the 50S ribosomal subunit.

Its function is as follows. This protein binds specifically to 23S rRNA; its binding is stimulated by other ribosomal proteins, e.g. L4, L17, and L20. It is important during the early stages of 50S assembly. It makes multiple contacts with different domains of the 23S rRNA in the assembled 50S subunit and ribosome. Functionally, the globular domain of the protein is located near the polypeptide exit tunnel on the outside of the subunit, while an extended beta-hairpin is found that lines the wall of the exit tunnel in the center of the 70S ribosome. This is Large ribosomal subunit protein uL22 from Micrococcus luteus (strain ATCC 4698 / DSM 20030 / JCM 1464 / CCM 169 / CCUG 5858 / IAM 1056 / NBRC 3333 / NCIMB 9278 / NCTC 2665 / VKM Ac-2230) (Micrococcus lysodeikticus).